A 685-amino-acid chain; its full sequence is MNALSKVRVYELSKELGISSKDLISLLKDEFSIEVKNHMSVVEEEDALLIKEFYGESKEENTEENIEEKYGDLQEAQIKVVKKNRKNKVKKNDDENDAQEEIVIEMEDTITVKELSDRLKKTYAEVIKELMMMGVMAAVNQEIDFEAAEKLGEKFEAIVVQREVDVLEESVEQYIEEEEEEGTVKRPPVVTVMGHVDHGKTSLLDAIRKEEVAASEAGGITQHIGAYTITINGEKITFLDTPGHEAFTSMRARGAQITDIVILVVAADDGIMPQTEEAINHCKAANVPMVVAINKMDRAGANPDKVKQQLAEKGLVAEDWGGDTITVPVSAHTKEGIDTLLEMVLLTAEMQELKSNPNRKAKGTVVDAKLDKGRGPVASLIVQNGTLNSGDSIIVGTTYGRIRAMFDDKGRKINSAGPSIPAEILGLSEVPSAGDRFYVVKDEKTAREMAEKRKEKTRSEYLATSKVSLEDLYSQIKEGKIKELNIIVKADVQGTIEAIRQSLEKLSTDEVKVRVIHGGVGAITETDVILANASSAVIIGFNVRPDSNAIVSAEKENVEIKTYRVIYSAIEDIKKAMIGMLEPEYKEVIQGRAEVRMTYKISNVGTVAGCYVQSGKITRNSGVRIIRDGIVIFESELSSLKRFKDDAKEVAAGYECGIMVEKFNDIKEGDTIEAYTMETIKKHTL.

Residues Lys-185–Lys-354 form the tr-type G domain. Residues Gly-194–Thr-201 are G1. Gly-194 to Thr-201 provides a ligand contact to GTP. Residues Gly-219–His-223 are G2. The segment at Asp-240–Gly-243 is G3. Residues Asp-240–His-244 and Asn-294–Asp-297 contribute to the GTP site. A G4 region spans residues Asn-294–Asp-297. The segment at Ser-330–His-332 is G5.

Belongs to the TRAFAC class translation factor GTPase superfamily. Classic translation factor GTPase family. IF-2 subfamily.

It is found in the cytoplasm. Functionally, one of the essential components for the initiation of protein synthesis. Protects formylmethionyl-tRNA from spontaneous hydrolysis and promotes its binding to the 30S ribosomal subunits. Also involved in the hydrolysis of GTP during the formation of the 70S ribosomal complex. The chain is Translation initiation factor IF-2 from Clostridium tetani (strain Massachusetts / E88).